Consider the following 148-residue polypeptide: Large ribosomal subunit protein uL13 (148 aa).

Belongs to the universal ribosomal protein uL13 family. Part of the 50S ribosomal subunit.

Functionally, this protein is one of the early assembly proteins of the 50S ribosomal subunit, although it is not seen to bind rRNA by itself. It is important during the early stages of 50S assembly. The polypeptide is Large ribosomal subunit protein uL13 (Lacticaseibacillus casei (strain BL23) (Lactobacillus casei)).